The sequence spans 776 residues: Serine/threonine-protein kinase SIK1 (776 aa).

The region spanning 27–278 (YDVERTLGKG…IAQIRQHRWM (252 aa)) is the Protein kinase domain. ATP is bound by residues 33–41 (LGKGNFAVV) and K56. The Proton acceptor role is filled by D149. The residue at position 182 (T182) is a Phosphothreonine; by LKB1 and GSK3-beta. S186 bears the Phosphoserine; by autocatalysis mark. The 41-residue stretch at 303–343 (DYNEQVLGIMQALGIDRQRTVESLQNSSYNHFAAIYYLLLE) folds into the UBA domain. Residue T322 is modified to Phosphothreonine; by CaMK1. 2 disordered regions span residues 350–371 (STQP…RNSD) and 449–472 (EARQ…STGR). Residue S577 is modified to Phosphoserine; by PKA. Positions 586–612 (KAFRQQLRKNARTKGFLGLNKIKGLAR) are RK-rich region. The tract at residues 621–643 (GSRGGMSTFHTPAPSSGLQGCTA) is disordered. Positions 628 to 643 (TFHTPAPSSGLQGCTA) are enriched in polar residues.

This sequence belongs to the protein kinase superfamily. CAMK Ser/Thr protein kinase family. AMPK subfamily. In terms of assembly, interacts (when phosphorylated on Thr-182 and Ser-186) with YWHAZ. Interacts with ATP1A1. It depends on Mg(2+) as a cofactor. In terms of processing, phosphorylated at Thr-182 by STK11/LKB1 in complex with STE20-related adapter-alpha (STRADA) pseudo kinase and CAB39, leading to its activation. Phosphorylation at Thr-182 promotes autophosphorylation at Ser-186, which is required for sustained activity. Autophosphorylation at Ser-186 is maintained by sequential phosphorylation at Thr-182 by GSK3-beta. GSK3-beta cannot initiate phosphorylation at Thr-182, it can only maintain it. Phosphorylation at Ser-577 by PKA promotes translocation to the cytoplasm. Phosphorylation at Thr-322 by CaMK1 following intracellular sodium concentration leads to activation.

Its subcellular location is the cytoplasm. It is found in the nucleus. The enzyme catalyses L-seryl-[protein] + ATP = O-phospho-L-seryl-[protein] + ADP + H(+). The catalysed reaction is L-threonyl-[protein] + ATP = O-phospho-L-threonyl-[protein] + ADP + H(+). Its activity is regulated as follows. Activated by phosphorylation on Thr-182. Also activated by phosphorylation on Thr-322 in response to increases in intracellular sodium in parallel with elevations in intracellular calcium through the reversible sodium/calcium exchanger. Its function is as follows. Serine/threonine-protein kinase involved in various processes such as cell cycle regulation, gluconeogenesis and lipogenesis regulation, muscle growth and differentiation and tumor suppression. Phosphorylates HDAC4, HDAC5, PPME1, SREBF1, CRTC1/TORC1 and CRTC2/TORC2. Acts as a tumor suppressor and plays a key role in p53/TP53-dependent anoikis, a type of apoptosis triggered by cell detachment: required for phosphorylation of p53/TP53 in response to loss of adhesion and is able to suppress metastasis. Part of a sodium-sensing signaling network, probably by mediating phosphorylation of PPME1: following increases in intracellular sodium, SIK1 is activated by CaMK1 and phosphorylates PPME1 subunit of protein phosphatase 2A (PP2A), leading to dephosphorylation of sodium/potassium-transporting ATPase ATP1A1 and subsequent increase activity of ATP1A1. Acts as a regulator of muscle cells by phosphorylating and inhibiting class II histone deacetylases HDAC4 and HDAC5, leading to promote expression of MEF2 target genes in myocytes. Also required during cardiomyogenesis by regulating the exit of cardiomyoblasts from the cell cycle via down-regulation of CDKN1C/p57Kip2. Acts as a regulator of hepatic gluconeogenesis by phosphorylating and repressing the CREB-specific coactivators CRTC1/TORC1 and CRTC2/TORC2, leading to inhibit CREB activity. Also regulates hepatic lipogenesis by phosphorylating and inhibiting SREBF1. In concert with CRTC1/TORC1, regulates the light-induced entrainment of the circadian clock by attenuating PER1 induction; represses CREB-mediated transcription of PER1 by phosphorylating and deactivating CRTC1/TORC1. The polypeptide is Serine/threonine-protein kinase SIK1 (Sik1) (Rattus norvegicus (Rat)).